The sequence spans 89 residues: Small ribosomal subunit protein uS15 (89 aa).

The protein belongs to the universal ribosomal protein uS15 family. As to quaternary structure, part of the 30S ribosomal subunit. Forms a bridge to the 50S subunit in the 70S ribosome, contacting the 23S rRNA.

In terms of biological role, one of the primary rRNA binding proteins, it binds directly to 16S rRNA where it helps nucleate assembly of the platform of the 30S subunit by binding and bridging several RNA helices of the 16S rRNA. Forms an intersubunit bridge (bridge B4) with the 23S rRNA of the 50S subunit in the ribosome. This Neisseria gonorrhoeae (strain ATCC 700825 / FA 1090) protein is Small ribosomal subunit protein uS15.